The sequence spans 536 residues: uncharacterized protein (536 aa).

The 232-residue stretch at 163 to 394 folds into the Radical SAM core domain; sequence LDAYDSMSVQ…MNFIPTRPLE (232 aa). Residues cysteine 177, cysteine 181, and cysteine 184 each coordinate [4Fe-4S] cluster.

[4Fe-4S] cluster is required as a cofactor.

This is an uncharacterized protein from Synechocystis sp. (strain ATCC 27184 / PCC 6803 / Kazusa).